The following is a 256-amino-acid chain: Imidazole glycerol phosphate synthase subunit HisF (256 aa).

Residues Asp12 and Asp131 contribute to the active site.

This sequence belongs to the HisA/HisF family. As to quaternary structure, heterodimer of HisH and HisF.

Its subcellular location is the cytoplasm. The catalysed reaction is 5-[(5-phospho-1-deoxy-D-ribulos-1-ylimino)methylamino]-1-(5-phospho-beta-D-ribosyl)imidazole-4-carboxamide + L-glutamine = D-erythro-1-(imidazol-4-yl)glycerol 3-phosphate + 5-amino-1-(5-phospho-beta-D-ribosyl)imidazole-4-carboxamide + L-glutamate + H(+). The protein operates within amino-acid biosynthesis; L-histidine biosynthesis; L-histidine from 5-phospho-alpha-D-ribose 1-diphosphate: step 5/9. Its function is as follows. IGPS catalyzes the conversion of PRFAR and glutamine to IGP, AICAR and glutamate. The HisF subunit catalyzes the cyclization activity that produces IGP and AICAR from PRFAR using the ammonia provided by the HisH subunit. The polypeptide is Imidazole glycerol phosphate synthase subunit HisF (Pseudomonas syringae pv. tomato (strain ATCC BAA-871 / DC3000)).